A 205-amino-acid polypeptide reads, in one-letter code: Holliday junction resolvase RecU (205 aa).

Residues 1 to 22 (MAINYPAGTRRRTAQAKNTMRT) are disordered. Residues Thr90, Asp92, Asp105, and Gln124 each contribute to the Mg(2+) site.

It belongs to the RecU family. Mg(2+) is required as a cofactor.

It localises to the cytoplasm. The enzyme catalyses Endonucleolytic cleavage at a junction such as a reciprocal single-stranded crossover between two homologous DNA duplexes (Holliday junction).. Its function is as follows. Endonuclease that resolves Holliday junction intermediates in genetic recombination. Cleaves mobile four-strand junctions by introducing symmetrical nicks in paired strands. Promotes annealing of linear ssDNA with homologous dsDNA. Required for DNA repair, homologous recombination and chromosome segregation. The protein is Holliday junction resolvase RecU of Leuconostoc citreum (strain KM20).